A 673-amino-acid polypeptide reads, in one-letter code: Methionine--tRNA ligase (673 aa).

A 'HIGH' region motif is present at residues 14-24; it reads YYPSGKLHIGN. The short motif at 310-314 is the 'KMSKS' region element; sequence KMSKS. Position 313 (lysine 313) interacts with ATP. The tRNA-binding domain occupies 571–673; sequence VFDKVELKVA…SEAPNGSSIS (103 aa).

This sequence belongs to the class-I aminoacyl-tRNA synthetase family. MetG type 2B subfamily. As to quaternary structure, homodimer.

It localises to the cytoplasm. The catalysed reaction is tRNA(Met) + L-methionine + ATP = L-methionyl-tRNA(Met) + AMP + diphosphate. Its function is as follows. Is required not only for elongation of protein synthesis but also for the initiation of all mRNA translation through initiator tRNA(fMet) aminoacylation. This is Methionine--tRNA ligase (metG) from Oceanobacillus iheyensis (strain DSM 14371 / CIP 107618 / JCM 11309 / KCTC 3954 / HTE831).